The chain runs to 395 residues: METKKYGLGTTAIHAGTLKNLYGTLAMPIYQTSTFIFDSAEQGGRRFALEEAGYIYTRLGNPTTTVLENKIAALEEGEAAVATSSGMGAISSTLWTVLKAGDHVVTDKTLYGCTFALMCHGLTRFGIEVTFVDTSNLDEVKNAMKKNTRVVYLETPANPNLKIVDLEALSKLAHTNPNTLVIVDNTFATPYMQKPLKLGADIVVHSVTKYINGHGDVIAGLVITNKELADQIRFIGLKDMTGAVLGPQDAYYIIRGMKTFEIRMERHCKNAKKVVEFLNKHPKIERVYYPGLETHPGHEIAKKQMKDFGAMISFELKGGFEAGKTLLNNLKLCSLAVSLGDTETLIQHPASMTHSPYTKEEREAAGITDGLVRLSVGLENVEDIIADLEQGLEKI.

Pyridoxal 5'-phosphate contacts are provided by residues 56-58 (YTR) and 86-87 (GM). Substrate is bound at residue tyrosine 111. 206 to 208 (SVT) contributes to the pyridoxal 5'-phosphate binding site. N6-(pyridoxal phosphate)lysine is present on lysine 209. Arginine 373 is a substrate binding site.

It belongs to the trans-sulfuration enzymes family. L-methionine gamma-lyase subfamily. In terms of assembly, homotetramer. It depends on pyridoxal 5'-phosphate as a cofactor.

The enzyme catalyses L-methionine + H2O = methanethiol + 2-oxobutanoate + NH4(+). It catalyses the reaction L-homocysteine + H2O = 2-oxobutanoate + hydrogen sulfide + NH4(+) + H(+). Functionally, catalyzes the alpha,gamma-elimination of L-methionine to produce methanethiol, 2-oxobutanoate and ammonia; methanethiol (methyl mercaptan) is considered to be one of the main causes of the oral malodor associated with periodontitis. Also displays homocysteine desulfhydrase activity, degrading homocysteine to produce hydrogen sulfide, 2-oxobutanoate and ammonia. L-cysteine and S-methyl-L-cysteine are poor substrates for the enzyme. Plays an important role in the resistance of F.nucleatum to the antibacterial agent 3-chloro-DL-alanine (3CA), thanks to its 3CA chloride-lyase (deaminating) activity. This is L-methionine gamma-lyase from Fusobacterium nucleatum subsp. polymorphum (Fusobacterium polymorphum).